A 622-amino-acid polypeptide reads, in one-letter code: SLAIN motif-containing protein-like (622 aa).

The stretch at 34 to 60 forms a coiled coil; that stretch reads DLKEVQKLHELVKRLEIQNQQLKIKRN. 2 disordered regions span residues 404 to 441 and 473 to 622; these read HRYSPSPLSSPRCQSPSAAESRATTSRIRPPRRSIQNH and VRSS…DGCY. Residues 405-415 show a composition bias toward low complexity; the sequence is RYSPSPLSSPR. Composition is skewed to polar residues over residues 416–430, 484–502, 525–591, and 599–611; these read CQSPSAAESRATTSR, QGPSSRLTRMQQPSTSTPP, VSTS…STVP, and SRRSLSSAKMNST.

The protein belongs to the SLAIN motif-containing family.

This is SLAIN motif-containing protein-like from Xenopus tropicalis (Western clawed frog).